We begin with the raw amino-acid sequence, 812 residues long: DNA gyrase subunit A (812 aa).

Residues 31–496 (IPDVRDGLKP…GNTDFNVEDV (466 aa)) form the Topo IIA-type catalytic domain. Y119 acts as the O-(5'-phospho-DNA)-tyrosine intermediate in catalysis. Positions 523–529 (QGRGGKG) match the GyrA-box motif.

The protein belongs to the type II topoisomerase GyrA/ParC subunit family. Heterotetramer, composed of two GyrA and two GyrB chains. In the heterotetramer, GyrA contains the active site tyrosine that forms a transient covalent intermediate with DNA, while GyrB binds cofactors and catalyzes ATP hydrolysis.

The protein localises to the cytoplasm. It carries out the reaction ATP-dependent breakage, passage and rejoining of double-stranded DNA.. Functionally, a type II topoisomerase that negatively supercoils closed circular double-stranded (ds) DNA in an ATP-dependent manner to modulate DNA topology and maintain chromosomes in an underwound state. Negative supercoiling favors strand separation, and DNA replication, transcription, recombination and repair, all of which involve strand separation. Also able to catalyze the interconversion of other topological isomers of dsDNA rings, including catenanes and knotted rings. Type II topoisomerases break and join 2 DNA strands simultaneously in an ATP-dependent manner. This is DNA gyrase subunit A from Kosmotoga olearia (strain ATCC BAA-1733 / DSM 21960 / TBF 19.5.1).